The sequence spans 3563 residues: D-lysergyl-peptide-synthetase subunit 1 (3563 aa).

The tract at residues 307-706 (SCSPRPNPQA…LGRKDDQVKI (400 aa)) is adenylation (A) domain 1. Residues 844–921 (EPKSDREKLL…EIVIVSTSAT (78 aa)) enclose the Carrier 1 domain. S881 carries the O-(pantetheine 4'-phosphoryl)serine modification. The segment at 963–1354 (EDIYPCTHLQ…EHILTEIHSN (392 aa)) is condensation (C) domain 1. Positions 1397–1804 (QEKCQAQPDA…RRKDAQVKIR (408 aa)) are adenylation (A) domain 2. The Carrier 2 domain occupies 1944–2020 (PPSNATEHEI…KLALARGVTQ (77 aa)). S1981 carries the post-translational modification O-(pantetheine 4'-phosphoryl)serine. A condensation (C) domain 2 region spans residues 2067–2486 (ERIYPCSPIQ…ALPVLDEDQM (420 aa)). Residues 2511–2909 (QCIRCPDSPS…GRNDDQVKVR (399 aa)) form an adenylation (A) domain 3 region. The Carrier 3 domain maps to 3025–3104 (PPRTALEAEL…RFGSYRRAGA (80 aa)). The residue at position 3064 (S3064) is an O-(pantetheine 4'-phosphoryl)serine. Residues 3166–3451 (LYFSKPMASE…VAKSTTWSSD (286 aa)) form a cyclization (Cyc) domain region.

It belongs to the NRP synthetase family.

It functions in the pathway alkaloid biosynthesis; ergot alkaloid biosynthesis. In terms of biological role, D-lysergyl-peptide-synthetase subunit 1; part of the gene cluster that mediates the biosynthesis of fungal ergot alkaloid. DmaW catalyzes the first step of ergot alkaloid biosynthesis by condensing dimethylallyl diphosphate (DMAP) and tryptophan to form 4-dimethylallyl-L-tryptophan. The second step is catalyzed by the methyltransferase easF that methylates 4-dimethylallyl-L-tryptophan in the presence of S-adenosyl-L-methionine, resulting in the formation of 4-dimethylallyl-L-abrine. The catalase easC and the FAD-dependent oxidoreductase easE then transform 4-dimethylallyl-L-abrine to chanoclavine-I which is further oxidized by easD in the presence of NAD(+), resulting in the formation of chanoclavine-I aldehyde. Agroclavine dehydrogenase easG then mediates the conversion of chanoclavine-I aldehyde to agroclavine via a non-enzymatic adduct reaction: the substrate is an iminium intermediate that is formed spontaneously from chanoclavine-I aldehyde in the presence of glutathione. The presence of easA is not required to complete this reaction. Further conversion of agroclavine to paspalic acid is a two-step process involving oxidation of agroclavine to elymoclavine and of elymoclavine to paspalic acid, the second step being performed by the elymoclavine oxidase cloA. Paspalic acid is then further converted to D-lysergic acid. Ergopeptines are assembled from D-lysergic acid and three different amino acids by the D-lysergyl-peptide-synthetases composed each of a monomudular and a trimodular nonribosomal peptide synthetase subunit. LpsB and lpsC encode the monomodular subunits responsible for D-lysergic acid activation and incorporation into the ergopeptine backbone. LpsA1 and A2 subunits encode the trimodular nonribosomal peptide synthetase assembling the tripeptide portion of ergopeptines. LpsA1 is responsible for formation of the major ergopeptine, ergotamine, and lpsA2 for alpha-ergocryptine, the minor ergopeptine of the total alkaloid mixture elaborated by C.purpurea. D-lysergyl-tripeptides are assembled by the nonribosomal peptide synthetases and released as N-(D-lysergyl-aminoacyl)-lactams. Cyclolization of the D-lysergyl-tripeptides is performed by the Fe(2+)/2-ketoglutarate-dependent dioxygenase easH which introduces a hydroxyl group into N-(D-lysergyl-aminoacyl)-lactam at alpha-C of the aminoacyl residue followed by spontaneous condensation with the terminal lactam carbonyl group. This is D-lysergyl-peptide-synthetase subunit 1 from Claviceps purpurea (Ergot fungus).